Consider the following 197-residue polypeptide: ATP synthase subunit delta (197 aa).

Residues 1–16 (MSSAVSASPQAASPQQ) are compositionally biased toward low complexity. Residues 1-20 (MSSAVSASPQAASPQQDRTS) form a disordered region.

It belongs to the ATPase delta chain family. F-type ATPases have 2 components, F(1) - the catalytic core - and F(0) - the membrane proton channel. F(1) has five subunits: alpha(3), beta(3), gamma(1), delta(1), epsilon(1). F(0) has three main subunits: a(1), b(2) and c(10-14). The alpha and beta chains form an alternating ring which encloses part of the gamma chain. F(1) is attached to F(0) by a central stalk formed by the gamma and epsilon chains, while a peripheral stalk is formed by the delta and b chains.

It localises to the cell inner membrane. F(1)F(0) ATP synthase produces ATP from ADP in the presence of a proton or sodium gradient. F-type ATPases consist of two structural domains, F(1) containing the extramembraneous catalytic core and F(0) containing the membrane proton channel, linked together by a central stalk and a peripheral stalk. During catalysis, ATP synthesis in the catalytic domain of F(1) is coupled via a rotary mechanism of the central stalk subunits to proton translocation. Its function is as follows. This protein is part of the stalk that links CF(0) to CF(1). It either transmits conformational changes from CF(0) to CF(1) or is implicated in proton conduction. The chain is ATP synthase subunit delta from Acidiphilium cryptum (strain JF-5).